A 351-amino-acid polypeptide reads, in one-letter code: Photosystem II D2 protein (351 aa).

Residues 39–59 (TAYLAIGGWLTGTTFVTSWYT) form a helical membrane-spanning segment. Chlorophyll a is bound at residue H116. The helical transmembrane segment at 123–139 (GFMLRQFELARLIGIRP) threads the bilayer. Pheophytin a is bound by residues Q128 and N141. A helical membrane pass occupies residues 151–164 (VFVSVFLLYPLGQS). Position 196 (H196) interacts with chlorophyll a. Residues 206–226 (GALLSAIHGVTVENTLYEDGE) form a helical membrane-spanning segment. 2 residues coordinate a plastoquinone: H213 and F260. A Fe cation-binding site is contributed by H213. H267 provides a ligand contact to Fe cation. The chain crosses the membrane as a helical span at residues 277–293 (GLWTSSIGIIGLALNLR).

It belongs to the reaction center PufL/M/PsbA/D family. PSII is composed of 1 copy each of membrane proteins PsbA, PsbB, PsbC, PsbD, PsbE, PsbF, PsbH, PsbI, PsbJ, PsbK, PsbL, PsbM, PsbT, PsbX, PsbY, PsbZ, Psb30/Ycf12, peripheral proteins PsbO, CyanoQ (PsbQ), PsbU, PsbV and a large number of cofactors. It forms dimeric complexes. The D1/D2 heterodimer binds P680, chlorophylls that are the primary electron donor of PSII, and subsequent electron acceptors. It shares a non-heme iron and each subunit binds pheophytin, quinone, additional chlorophylls, carotenoids and lipids. There is also a Cl(-1) ion associated with D1 and D2, which is required for oxygen evolution. The PSII complex binds additional chlorophylls, carotenoids and specific lipids. serves as cofactor.

It is found in the host cellular thylakoid membrane. It catalyses the reaction 2 a plastoquinone + 4 hnu + 2 H2O = 2 a plastoquinol + O2. In terms of biological role, photosystem II (PSII) is a light-driven water:plastoquinone oxidoreductase that uses light energy to abstract electrons from H(2)O, generating O(2) and a proton gradient subsequently used for ATP formation. It consists of a core antenna complex that captures photons, and an electron transfer chain that converts photonic excitation into a charge separation. The D1/D2 (PsbA/PsbD) reaction center heterodimer binds P680, the primary electron donor of PSII as well as several subsequent electron acceptors. D2 is needed for assembly of a stable PSII complex. The chain is Photosystem II D2 protein (psbD) from Synechococcus.